A 225-amino-acid polypeptide reads, in one-letter code: Golgi to ER traffic protein 1 (225 aa).

Residue Met1 is a topological domain, lumenal. Residues 2–21 form a helical membrane-spanning segment; sequence NWVIIAALFFVIINKLLQYT. Over 22-107 the chain is Cytoplasmic; the sequence is SRYQEAWINK…SQSKLFNRLK (86 aa). Positions 37–104 form a coiled coil; the sequence is DISSLSKEYS…AKDSQSKLFN (68 aa). A helical membrane pass occupies residues 108–128; sequence LLTLTLPFMILKLWKGKFIVY. Over 129–172 the chain is Lumenal; it reads DIPTKDTFPVIVNGVLSQGLLYIPLLPINFLRGIDPNKHILVPG. The helical transmembrane segment at 173–189 threads the bilayer; the sequence is VSLGIWLMALTKTIDTV. The Cytoplasmic portion of the chain corresponds to 190-225; it reads EFIVKQLVFQPVVSKQVKEKTKEKVVELKTTEAELD.

It belongs to the WRB/GET1 family. As to quaternary structure, component of the Golgi to ER traffic (GET) complex, which is composed of GET1, GET2 and GET3. Within the complex, GET1 and GET2 form a heterotetramer which is stabilized by phosphatidylinositol binding and which binds to the GET3 homodimer.

It is found in the endoplasmic reticulum membrane. Its subcellular location is the golgi apparatus membrane. Its function is as follows. Required for the post-translational delivery of tail-anchored (TA) proteins to the endoplasmic reticulum. Together with GET2, acts as a membrane receptor for soluble GET3, which recognizes and selectively binds the transmembrane domain of TA proteins in the cytosol. The GET complex cooperates with the HDEL receptor ERD2 to mediate the ATP-dependent retrieval of resident ER proteins that contain a C-terminal H-D-E-L retention signal from the Golgi to the ER. The sequence is that of Golgi to ER traffic protein 1 from Vanderwaltozyma polyspora (strain ATCC 22028 / DSM 70294 / BCRC 21397 / CBS 2163 / NBRC 10782 / NRRL Y-8283 / UCD 57-17) (Kluyveromyces polysporus).